Reading from the N-terminus, the 607-residue chain is Elongation factor 4 (607 aa).

One can recognise a tr-type G domain in the interval Ser11–Thr193. GTP-binding positions include Asp23–Thr28 and Asn140–Asp143.

This sequence belongs to the TRAFAC class translation factor GTPase superfamily. Classic translation factor GTPase family. LepA subfamily.

It localises to the cell membrane. It catalyses the reaction GTP + H2O = GDP + phosphate + H(+). Functionally, required for accurate and efficient protein synthesis under certain stress conditions. May act as a fidelity factor of the translation reaction, by catalyzing a one-codon backward translocation of tRNAs on improperly translocated ribosomes. Back-translocation proceeds from a post-translocation (POST) complex to a pre-translocation (PRE) complex, thus giving elongation factor G a second chance to translocate the tRNAs correctly. Binds to ribosomes in a GTP-dependent manner. This Bacillus cereus (strain ZK / E33L) protein is Elongation factor 4.